The primary structure comprises 242 residues: Terpene cyclase dpchB (242 aa).

Helical transmembrane passes span 16 to 36 (VVWI…ANYV), 51 to 71 (ALLP…MYAF), 78 to 95 (YVHF…YTAV), 114 to 134 (LIFV…AKQV), 141 to 161 (AWSA…QLLC), 169 to 189 (SYFL…QDII), and 207 to 227 (IWFV…LWYV).

This sequence belongs to the paxB family.

It is found in the membrane. It functions in the pathway secondary metabolite biosynthesis; terpenoid biosynthesis. Functionally, terpene cyclase; part of the gene cluster that mediates the biosynthesis of the diterpenoid pyrones higginsianins A and B. The first step of the pathway is the synthesis of the alpha-pyrone moiety by the polyketide synthase dpchA via condensation of one acetyl-CoA starter unit with 3 malonyl-CoA units and 2 methylations. The alpha-pyrone is then combined with geranylgeranyl pyrophosphate (GGPP) formed by the GGPP synthase dpchD through the action of the prenyltransferase dpchC to yield a linear alpha-pyrone diterpenoid. Subsequent steps in the diterpenoid pyrone biosynthetic pathway involve the decalin core formation, which is initiated by the epoxidation of the C10-C11 olefin by the FAD-dependent oxidoreductase dpchE, and is followed by a cyclization cascade catalyzed by the terpene cyclase dpchB. The short chain dehydrogenase/reductase dpchG then oxidizes the 8S hydroxy group to a ketone and the short chain dehydrogenase/reductase dpchH reduces the ketone to the 8R hydroxy group to yield higginsianin B. Finally, the FAD-dependent oxidoreductase dpchF converts higginsianin B into higginsianin A. The polypeptide is Terpene cyclase dpchB (Colletotrichum higginsianum (strain IMI 349063) (Crucifer anthracnose fungus)).